The following is a 454-amino-acid chain: Bifunctional protein GlmU (454 aa).

Residues 1 to 225 form a pyrophosphorylase region; the sequence is MNIVILAAGM…VWETLGVNSK (225 aa). UDP-N-acetyl-alpha-D-glucosamine is bound by residues 6 to 9, K20, Q71, 76 to 77, 98 to 100, G135, E150, N165, and N223; these read LAAG, GT, and YGD. D100 serves as a coordination point for Mg(2+). Position 223 (N223) interacts with Mg(2+). Residues 226–246 form a linker region; it reads LQLAEVERIHQGNQARRLLEA. The tract at residues 247–454 is N-acetyltransferase; it reads GVTLLDPARI…WQRPVKQPKQ (208 aa). Residues R329 and K347 each contribute to the UDP-N-acetyl-alpha-D-glucosamine site. Catalysis depends on H359, which acts as the Proton acceptor. Positions 362 and 373 each coordinate UDP-N-acetyl-alpha-D-glucosamine. Residues A376, 382–383, S401, A419, and R436 each bind acetyl-CoA; that span reads NY.

It in the N-terminal section; belongs to the N-acetylglucosamine-1-phosphate uridyltransferase family. This sequence in the C-terminal section; belongs to the transferase hexapeptide repeat family. Homotrimer. Mg(2+) is required as a cofactor.

It localises to the cytoplasm. It carries out the reaction alpha-D-glucosamine 1-phosphate + acetyl-CoA = N-acetyl-alpha-D-glucosamine 1-phosphate + CoA + H(+). It catalyses the reaction N-acetyl-alpha-D-glucosamine 1-phosphate + UTP + H(+) = UDP-N-acetyl-alpha-D-glucosamine + diphosphate. It participates in nucleotide-sugar biosynthesis; UDP-N-acetyl-alpha-D-glucosamine biosynthesis; N-acetyl-alpha-D-glucosamine 1-phosphate from alpha-D-glucosamine 6-phosphate (route II): step 2/2. The protein operates within nucleotide-sugar biosynthesis; UDP-N-acetyl-alpha-D-glucosamine biosynthesis; UDP-N-acetyl-alpha-D-glucosamine from N-acetyl-alpha-D-glucosamine 1-phosphate: step 1/1. It functions in the pathway bacterial outer membrane biogenesis; LPS lipid A biosynthesis. Catalyzes the last two sequential reactions in the de novo biosynthetic pathway for UDP-N-acetylglucosamine (UDP-GlcNAc). The C-terminal domain catalyzes the transfer of acetyl group from acetyl coenzyme A to glucosamine-1-phosphate (GlcN-1-P) to produce N-acetylglucosamine-1-phosphate (GlcNAc-1-P), which is converted into UDP-GlcNAc by the transfer of uridine 5-monophosphate (from uridine 5-triphosphate), a reaction catalyzed by the N-terminal domain. This chain is Bifunctional protein GlmU, found in Cupriavidus taiwanensis (strain DSM 17343 / BCRC 17206 / CCUG 44338 / CIP 107171 / LMG 19424 / R1) (Ralstonia taiwanensis (strain LMG 19424)).